A 530-amino-acid chain; its full sequence is Metal transporter Nramp2 (530 aa).

The interval 1–35 (MENDVKENLEEEEDRLLPPPPPSQSLPSTDSESEA) is disordered. 12 consecutive transmembrane segments (helical) span residues 68-88 (LWLF…PGNL), 96-116 (AIAG…GLLI), 153-173 (LALI…IQIL), 177-197 (FLPL…FLFL), 205-225 (LEAV…WMFG), 251-271 (AVGV…SALV), 297-317 (VALF…AKGF), 339-359 (FGGG…AAGQ), 395-415 (IVPT…LDVL), 418-438 (WLNV…LTLV), 456-476 (IAWT…LDFF), and 484-504 (LFGV…VYLI).

The protein belongs to the NRAMP (TC 2.A.55) family.

The protein resides in the membrane. Its function is as follows. Seems to be involved in iron uptake. The sequence is that of Metal transporter Nramp2 (NRAMP2) from Arabidopsis thaliana (Mouse-ear cress).